We begin with the raw amino-acid sequence, 255 residues long: 4-hydroxy-tetrahydrodipicolinate reductase (255 aa).

Residues 8 to 13 (GSTGRM), 88 to 90 (ATT), and 112 to 115 (SSNM) each bind NAD(+). H144 serves as the catalytic Proton donor/acceptor. Position 145 (H145) interacts with (S)-2,3,4,5-tetrahydrodipicolinate. Residue K148 is the Proton donor of the active site. Position 154–155 (154–155 (GT)) interacts with (S)-2,3,4,5-tetrahydrodipicolinate.

It belongs to the DapB family.

It is found in the cytoplasm. The catalysed reaction is (S)-2,3,4,5-tetrahydrodipicolinate + NAD(+) + H2O = (2S,4S)-4-hydroxy-2,3,4,5-tetrahydrodipicolinate + NADH + H(+). It carries out the reaction (S)-2,3,4,5-tetrahydrodipicolinate + NADP(+) + H2O = (2S,4S)-4-hydroxy-2,3,4,5-tetrahydrodipicolinate + NADPH + H(+). It functions in the pathway amino-acid biosynthesis; L-lysine biosynthesis via DAP pathway; (S)-tetrahydrodipicolinate from L-aspartate: step 4/4. Catalyzes the conversion of 4-hydroxy-tetrahydrodipicolinate (HTPA) to tetrahydrodipicolinate. The sequence is that of 4-hydroxy-tetrahydrodipicolinate reductase from Sulfurovum sp. (strain NBC37-1).